A 357-amino-acid polypeptide reads, in one-letter code: Beta-hexosaminidase (357 aa).

Substrate contacts are provided by residues Asp66, Arg74, Arg140, and 170-171 (KH). His183 acts as the Proton donor/acceptor in catalysis. Asp254 functions as the Nucleophile in the catalytic mechanism.

Belongs to the glycosyl hydrolase 3 family. NagZ subfamily.

It is found in the cytoplasm. It carries out the reaction Hydrolysis of terminal non-reducing N-acetyl-D-hexosamine residues in N-acetyl-beta-D-hexosaminides.. It functions in the pathway cell wall biogenesis; peptidoglycan recycling. In terms of biological role, plays a role in peptidoglycan recycling by cleaving the terminal beta-1,4-linked N-acetylglucosamine (GlcNAc) from peptide-linked peptidoglycan fragments, giving rise to free GlcNAc, anhydro-N-acetylmuramic acid and anhydro-N-acetylmuramic acid-linked peptides. This is Beta-hexosaminidase from Chromobacterium violaceum (strain ATCC 12472 / DSM 30191 / JCM 1249 / CCUG 213 / NBRC 12614 / NCIMB 9131 / NCTC 9757 / MK).